The sequence spans 363 residues: UDP-3-O-acylglucosamine N-acyltransferase (363 aa).

The Proton acceptor role is filled by His252.

Belongs to the transferase hexapeptide repeat family. LpxD subfamily. In terms of assembly, homotrimer.

It carries out the reaction a UDP-3-O-[(3R)-3-hydroxyacyl]-alpha-D-glucosamine + a (3R)-hydroxyacyl-[ACP] = a UDP-2-N,3-O-bis[(3R)-3-hydroxyacyl]-alpha-D-glucosamine + holo-[ACP] + H(+). Its pathway is bacterial outer membrane biogenesis; LPS lipid A biosynthesis. Its function is as follows. Catalyzes the N-acylation of UDP-3-O-acylglucosamine using 3-hydroxyacyl-ACP as the acyl donor. Is involved in the biosynthesis of lipid A, a phosphorylated glycolipid that anchors the lipopolysaccharide to the outer membrane of the cell. This chain is UDP-3-O-acylglucosamine N-acyltransferase, found in Cupriavidus necator (strain ATCC 17699 / DSM 428 / KCTC 22496 / NCIMB 10442 / H16 / Stanier 337) (Ralstonia eutropha).